The primary structure comprises 363 residues: Inositol-3-phosphate synthase (363 aa).

NAD(+) is bound by residues D68, A127, Y147, S190, D225, and K238.

It belongs to the myo-inositol 1-phosphate synthase family. Monomer. NAD(+) serves as cofactor.

It catalyses the reaction D-glucose 6-phosphate = 1D-myo-inositol 3-phosphate. Its pathway is polyol metabolism; myo-inositol biosynthesis; myo-inositol from D-glucose 6-phosphate: step 1/2. Key enzyme in myo-inositol biosynthesis pathway that catalyzes the conversion of glucose 6-phosphate to 1D-myo-inositol 3-phosphate in a NAD-dependent manner. Plays a key role in oxidative stress resistance as its product is the precursor of the protective antioxidant mycothiol (MSH or AcCys-GlcN-Ins). This is Inositol-3-phosphate synthase from Corynebacterium glutamicum (strain ATCC 13032 / DSM 20300 / JCM 1318 / BCRC 11384 / CCUG 27702 / LMG 3730 / NBRC 12168 / NCIMB 10025 / NRRL B-2784 / 534).